We begin with the raw amino-acid sequence, 63 residues long: Large ribosomal subunit protein uL29 (63 aa).

Belongs to the universal ribosomal protein uL29 family.

The chain is Large ribosomal subunit protein uL29 from Sodalis glossinidius (strain morsitans).